The primary structure comprises 332 residues: Procathepsin L (332 aa).

The first 17 residues, 1 to 17 (MHPLLFLAGLCLGVASA), serve as a signal peptide directing secretion. The propeptide at 18 to 112 (APQLYQSLDA…KVFQAPFFVE (95 aa)) is activation peptide. Glu-121 is a binding site for Zn(2+). Cys-137 is an active-site residue. 4 residues coordinate Zn(2+): Glu-162, Asp-183, Glu-198, and Asp-208. A disulfide bridge links Cys-168 with Cys-210. N-linked (GlcNAc...) asparagine glycosylation occurs at Asn-220. The Zn(2+) site is built by Asp-226, Asp-249, Asp-272, and Asp-274. Cys-268 and Cys-321 are oxidised to a cystine. His-275 is an active-site residue. A propeptide spanning residues 288 to 290 (ETE) is cleaved from the precursor. Asn-299 is a catalytic residue.

This sequence belongs to the peptidase C1 family. Dimer of a heavy and a light chain linked by disulfide bonds. Interacts with Long isoform of CD74/Ii chain; the interaction stabilizes the conformation of mature CTSL. Post-translationally, during export along the endocytic pathway, pro-CTSL undergoes several proteolytic cleavages to generate the CTSL single-chain and two-chain mature forms, composed of a heavy chain linked to a light chain by disulfide bonds. Autocleavage; produces the single-chain CTSL after cleavage of the propeptide. The cleavage can be intermolecular. Expressed in the endometrium.

It localises to the lysosome. It is found in the apical cell membrane. The protein resides in the cytoplasmic vesicle. The protein localises to the secretory vesicle. Its subcellular location is the chromaffin granule. It localises to the secreted. It is found in the extracellular space. The enzyme catalyses Specificity close to that of papain. As compared to cathepsin B, cathepsin L exhibits higher activity toward protein substrates, but has little activity on Z-Arg-Arg-NHMec, and no peptidyl-dipeptidase activity.. Its activity is regulated as follows. Inhibited by the propeptide produced by autocleavage. Long isoform of CD74/Ii chain stabilizes the conformation of mature CTSL by binding to its active site and serving as a chaperone to help maintain a pool of mature enzyme in endocytic compartments and extracellular space of APCs. IFNG enhances the conversion into the CTSL mature and active form. Inhibited by CST6. Inhibited by the glycopeptide antibiotic teicoplanin. Inhibited by amantadine. In terms of biological role, thiol protease important for the overall degradation of proteins in lysosomes. Plays a critical for normal cellular functions such as general protein turnover, antigen processing and bone remodeling. Involved in the solubilization of cross-linked TG/thyroglobulin and in the subsequent release of thyroid hormone thyroxine (T4) by limited proteolysis of TG/thyroglobulin in the thyroid follicle lumen. In neuroendocrine chromaffin cells secretory vesicles, catalyzes the prohormone proenkephalin processing to the active enkephalin peptide neurotransmitter. In thymus, regulates CD4(+) T cell positive selection by generating the major histocompatibility complex class II (MHCII) bound peptide ligands presented by cortical thymic epithelial cells. Also mediates invariant chain processing in cortical thymic epithelial cells. Major elastin-degrading enzyme at neutral pH. Accumulates as a mature and active enzyme in the extracellular space of antigen presenting cells (APCs) to regulate degradation of the extracellular matrix in the course of inflammation. Secreted form generates endostatin from COL18A1. Critical for cardiac morphology and function. Plays an important role in hair follicle morphogenesis and cycling, as well as epidermal differentiation. Required for maximal stimulation of steroidogenesis by TIMP1. This is Procathepsin L (CTSL) from Felis catus (Cat).